The sequence spans 164 residues: NADH-quinone oxidoreductase subunit C (164 aa).

The protein belongs to the complex I 30 kDa subunit family. NDH-1 is composed of 14 different subunits. Subunits NuoB, C, D, E, F, and G constitute the peripheral sector of the complex.

It is found in the cell inner membrane. The enzyme catalyses a quinone + NADH + 5 H(+)(in) = a quinol + NAD(+) + 4 H(+)(out). Its function is as follows. NDH-1 shuttles electrons from NADH, via FMN and iron-sulfur (Fe-S) centers, to quinones in the respiratory chain. The immediate electron acceptor for the enzyme in this species is believed to be ubiquinone. Couples the redox reaction to proton translocation (for every two electrons transferred, four hydrogen ions are translocated across the cytoplasmic membrane), and thus conserves the redox energy in a proton gradient. This chain is NADH-quinone oxidoreductase subunit C, found in Geotalea uraniireducens (strain Rf4) (Geobacter uraniireducens).